The chain runs to 305 residues: MVKTEKFIQKSVEEIQKEAGNEKVVMALSGGVDSSVCASLAARAIGDRLIPIYIDTGLMRKGETERIKAVFGNIRLQVVDAGDEFVAALAGITDPEKKRKAIGERFIRVFEREAKKSGATCLLQGTIYPDRIESEGGIKSHHNVGGMPEHTAFKKVIEPIRDLYKDEVREVAGALGLPPEIQHRMPFPGPGLAVRILGEVTKEKVAVIREANWIAESEIVEKYRPWQCFAALIGLGTGVKGDNRIHGWIVAVRAVNSRDGMTADPLEIPFADLVRIGSRITAEIPSVARVVYDITPKPPATIEYE.

Positions 2-184 (VKTEKFIQKS…LGLPPEIQHR (183 aa)) constitute a GMPS ATP-PPase domain. 29–35 (SGGVDSS) contributes to the ATP binding site.

As to quaternary structure, heterodimer composed of a glutamine amidotransferase subunit (A) and a GMP-binding subunit (B).

It carries out the reaction XMP + L-glutamine + ATP + H2O = GMP + L-glutamate + AMP + diphosphate + 2 H(+). It participates in purine metabolism; GMP biosynthesis; GMP from XMP (L-Gln route): step 1/1. Catalyzes the synthesis of GMP from XMP. This is GMP synthase [glutamine-hydrolyzing] subunit B from Methanoregula boonei (strain DSM 21154 / JCM 14090 / 6A8).